Reading from the N-terminus, the 427-residue chain is Serine hydroxymethyltransferase (427 aa).

Residues L122 and 126–128 each bind (6S)-5,6,7,8-tetrahydrofolate; that span reads GHL. N6-(pyridoxal phosphate)lysine is present on K231. Residues E247 and 355–357 contribute to the (6S)-5,6,7,8-tetrahydrofolate site; that span reads SPF.

Belongs to the SHMT family. As to quaternary structure, homodimer. Pyridoxal 5'-phosphate serves as cofactor.

It localises to the cytoplasm. It carries out the reaction (6R)-5,10-methylene-5,6,7,8-tetrahydrofolate + glycine + H2O = (6S)-5,6,7,8-tetrahydrofolate + L-serine. It participates in one-carbon metabolism; tetrahydrofolate interconversion. The protein operates within amino-acid biosynthesis; glycine biosynthesis; glycine from L-serine: step 1/1. Catalyzes the reversible interconversion of serine and glycine with tetrahydrofolate (THF) serving as the one-carbon carrier. This reaction serves as the major source of one-carbon groups required for the biosynthesis of purines, thymidylate, methionine, and other important biomolecules. Also exhibits THF-independent aldolase activity toward beta-hydroxyamino acids, producing glycine and aldehydes, via a retro-aldol mechanism. In Crocosphaera subtropica (strain ATCC 51142 / BH68) (Cyanothece sp. (strain ATCC 51142)), this protein is Serine hydroxymethyltransferase.